We begin with the raw amino-acid sequence, 193 residues long: ATP synthase subunit delta (193 aa).

It belongs to the ATPase delta chain family. In terms of assembly, F-type ATPases have 2 components, F(1) - the catalytic core - and F(0) - the membrane proton channel. F(1) has five subunits: alpha(3), beta(3), gamma(1), delta(1), epsilon(1). F(0) has three main subunits: a(1), b(2) and c(10-14). The alpha and beta chains form an alternating ring which encloses part of the gamma chain. F(1) is attached to F(0) by a central stalk formed by the gamma and epsilon chains, while a peripheral stalk is formed by the delta and b chains.

The protein resides in the cell inner membrane. Functionally, f(1)F(0) ATP synthase produces ATP from ADP in the presence of a proton or sodium gradient. F-type ATPases consist of two structural domains, F(1) containing the extramembraneous catalytic core and F(0) containing the membrane proton channel, linked together by a central stalk and a peripheral stalk. During catalysis, ATP synthesis in the catalytic domain of F(1) is coupled via a rotary mechanism of the central stalk subunits to proton translocation. In terms of biological role, this protein is part of the stalk that links CF(0) to CF(1). It either transmits conformational changes from CF(0) to CF(1) or is implicated in proton conduction. This is ATP synthase subunit delta from Allorhizobium ampelinum (strain ATCC BAA-846 / DSM 112012 / S4) (Agrobacterium vitis (strain S4)).